We begin with the raw amino-acid sequence, 60 residues long: Ribosome modulation factor (60 aa).

The protein belongs to the ribosome modulation factor family.

It localises to the cytoplasm. In terms of biological role, during stationary phase, converts 70S ribosomes to an inactive dimeric form (100S ribosomes). The sequence is that of Ribosome modulation factor from Kangiella koreensis (strain DSM 16069 / JCM 12317 / KCTC 12182 / SW-125).